Reading from the N-terminus, the 303-residue chain is tRNA pseudouridine synthase-like 1 (303 aa).

Residue aspartate 66 is the Nucleophile of the active site. Serine 84 bears the Phosphoserine mark. Residue tyrosine 130 coordinates substrate.

Belongs to the tRNA pseudouridine synthase TruA family.

The catalysed reaction is a uridine in tRNA = a pseudouridine in tRNA. The protein is tRNA pseudouridine synthase-like 1 (PUSL1) of Homo sapiens (Human).